The primary structure comprises 429 residues: Enolase (429 aa).

Glutamine 168 is a binding site for (2R)-2-phosphoglycerate. Catalysis depends on glutamate 210, which acts as the Proton donor. Aspartate 247, glutamate 288, and aspartate 315 together coordinate Mg(2+). Residues lysine 340, arginine 369, serine 370, and lysine 391 each coordinate (2R)-2-phosphoglycerate. Catalysis depends on lysine 340, which acts as the Proton acceptor.

It belongs to the enolase family. It depends on Mg(2+) as a cofactor.

The protein resides in the cytoplasm. It is found in the secreted. Its subcellular location is the cell surface. It catalyses the reaction (2R)-2-phosphoglycerate = phosphoenolpyruvate + H2O. It participates in carbohydrate degradation; glycolysis; pyruvate from D-glyceraldehyde 3-phosphate: step 4/5. In terms of biological role, catalyzes the reversible conversion of 2-phosphoglycerate (2-PG) into phosphoenolpyruvate (PEP). It is essential for the degradation of carbohydrates via glycolysis. This Nostoc punctiforme (strain ATCC 29133 / PCC 73102) protein is Enolase.